The following is a 745-amino-acid chain: Multiple C2 domain and transmembrane region protein 13 (745 aa).

The segment at 1-30 (MAANKDEFSVKQISPKLGGERGARNPYGPT) is disordered. C2 domains follow at residues 21-139 (RGAR…PQRY), 171-293 (DASE…SAPA), and 326-453 (AEES…ACSY). Ca(2+)-binding residues include Asp-56, Asp-61, Asp-106, and Asn-110. 2 consecutive transmembrane segments (helical) span residues 568 to 588 (SLIV…LVGL) and 688 to 708 (FYCW…PMWL).

The protein belongs to the MCTP family. The cofactor is Ca(2+). In terms of tissue distribution, expressed in incipient leaf primordia.

It is found in the cell membrane. It localises to the cytoplasm. In terms of biological role, may function as a signaling molecule by regulating the trafficking of other regulators. The protein is Multiple C2 domain and transmembrane region protein 13 of Arabidopsis thaliana (Mouse-ear cress).